A 427-amino-acid chain; its full sequence is Amino acid transporter AVT3A (427 aa).

A disordered region spans residues 1–35 (MRYDQEAGSSSHSLPSGSSSHSLPPTEDTPLLGPR). The Cytoplasmic portion of the chain corresponds to 1–42 (MRYDQEAGSSSHSLPSGSSSHSLPPTEDTPLLGPRTLSSQPK). The segment covering 8–24 (GSSSHSLPSGSSSHSLP) has biased composition (low complexity). A helical membrane pass occupies residues 43-63 (TFANVFIAIVGAGVLGLPYTF). Topologically, residues 64–69 (KKTGWL) are vacuolar. The helical transmembrane segment at 70–90 (LGLLTLLFVSSLTFFCMMLLV) threads the bilayer. Residues 91–122 (HTRRKLESLSGFNSITSFGDLGESVCGPAGRL) lie on the Cytoplasmic side of the membrane. Residues 123 to 143 (VVDVMLVLSQSGFCVSYLIFV) traverse the membrane as a helical segment. Residues 144–157 (ATTMANLLSRGTEH) lie on the Vacuolar side of the membrane. The helical transmembrane segment at 158-178 (ILGLDAASIYLWGCFPFQLGL) threads the bilayer. Topologically, residues 179–186 (NSIPSLTH) are cytoplasmic. Residues 187–207 (LAPLSIFADIVDVAATLVVMV) traverse the membrane as a helical segment. Residues 208-227 (QDVFIFLKRRPPLRVFGGVS) are Vacuolar-facing. Residues 228-248 (VFFYGLGVAVYAFEGIGMVLP) form a helical membrane-spanning segment. At 249 to 262 (LELEAKYKDKFGRA) the chain is on the cytoplasmic side. Residues 263-283 (LGLAMGLISIMYGAFGLLGYM) form a helical membrane-spanning segment. Residues 284–300 (AYGEETKDIITTNLGTG) lie on the Vacuolar side of the membrane. A helical transmembrane segment spans residues 301–321 (VVSTLVQLGLAINLFFTFPLM). Topologically, residues 322–339 (MQPVYEVVERRLCSSRYS) are cytoplasmic. Residues 340–360 (VWVRWATVLVVTLVALLVPNF) traverse the membrane as a helical segment. The Vacuolar portion of the chain corresponds to 361–362 (AD). A helical membrane pass occupies residues 363-383 (FLSLVGSSVCVVLGFVLPSLF). Residues 384 to 396 (HLQAFKNELSITR) lie on the Cytoplasmic side of the membrane. A helical transmembrane segment spans residues 397–417 (IVVDVLVFLIGVMIAITGTWT). At 418-427 (AVHEILTSKA) the chain is on the vacuolar side.

Belongs to the amino acid/polyamine transporter 2 family. Amino acid/auxin permease (AAAP) (TC 2.A.18.8) subfamily. Ubiquitous.

It localises to the vacuole membrane. In terms of biological role, translocates preferentially neutral amino acids and to a lesser extent aromatic amino acids from the vacuole to the cytoplasm. Requires ATP for function. The chain is Amino acid transporter AVT3A from Arabidopsis thaliana (Mouse-ear cress).